A 565-amino-acid chain; its full sequence is Transcription factor asqA (565 aa).

Residues 204-273 (MDTAMAQAVR…HSMPALCIDS (70 aa)) form a fungal transcription factor domain region.

It localises to the nucleus. Functionally, transcription factor that regulates specifically the 4'-methoxyviridicatin/aspoquinolone biosynthesis cluster. In Emericella nidulans (strain FGSC A4 / ATCC 38163 / CBS 112.46 / NRRL 194 / M139) (Aspergillus nidulans), this protein is Transcription factor asqA.